The chain runs to 214 residues: Vascular endothelial growth factor A (214 aa).

A signal peptide spans 1 to 26; that stretch reads MNFLLSWVHWSLALLLYLHHAKWSQA. 3 disulfide bridges follow: Cys-51–Cys-93, Cys-82–Cys-127, and Cys-86–Cys-129. Residue Asn-100 is glycosylated (N-linked (GlcNAc...) asparagine). Residues 131–142 are compositionally biased toward basic and acidic residues; that stretch reads PKKDRARQEKKS. Positions 131-162 are disordered; sequence PKKDRARQEKKSIRGKGKGQKRKRKKSRYKPW. The segment covering 143-159 has biased composition (basic residues); the sequence is IRGKGKGQKRKRKKSRY.

It belongs to the PDGF/VEGF growth factor family. Homodimer; disulfide-linked. Also found as heterodimer with PGF. Interacts with NRP1. Interacts with BSG. Interacts with CD82; this interaction inhibits VEGFA-mediated signaling pathway.

The protein localises to the secreted. In terms of biological role, growth factor active in angiogenesis, vasculogenesis and endothelial cell growth. Induces endothelial cell proliferation, promotes cell migration, inhibits apoptosis and induces permeabilization of blood vessels. Binds to the FLT1/VEGFR1 and KDR/VEGFR2 receptors, heparan sulfate and heparin. Binding to NRP1 receptor initiates a signaling pathway needed for motor neuron axon guidance and cell body migration, including for the caudal migration of facial motor neurons from rhombomere 4 to rhombomere 6 during embryonic development. Also binds the DEAR/FBXW7-AS1 receptor. The protein is Vascular endothelial growth factor A (VEGFA) of Canis lupus familiaris (Dog).